Consider the following 814-residue polypeptide: Acyl-coenzyme A dehydrogenase (814 aa).

The Proton acceptor role is filled by E497.

The protein belongs to the acyl-CoA dehydrogenase family. FAD serves as cofactor.

It carries out the reaction a medium-chain 2,3-saturated fatty acyl-CoA + oxidized [electron-transfer flavoprotein] + H(+) = a medium-chain (2E)-enoyl-CoA + reduced [electron-transfer flavoprotein]. The enzyme catalyses a long-chain 2,3-saturated fatty acyl-CoA + oxidized [electron-transfer flavoprotein] + H(+) = a long-chain (2E)-enoyl-CoA + reduced [electron-transfer flavoprotein]. The protein operates within lipid metabolism; fatty acid beta-oxidation. Its function is as follows. Catalyzes the dehydrogenation of acyl-coenzymes A (acyl-CoAs) to 2-enoyl-CoAs, the first step of the beta-oxidation cycle of fatty acid degradation. Is required for S.typhimurium to utilize medium- and long-chain fatty acids as sole carbon sources for growth. Is needed for bacterial survival during carbone-source starvation. This chain is Acyl-coenzyme A dehydrogenase (fadE), found in Salmonella typhimurium (strain LT2 / SGSC1412 / ATCC 700720).